A 485-amino-acid polypeptide reads, in one-letter code: Neuropeptide F receptor (485 aa).

The Extracellular segment spans residues 1-91 (MIISMNQTEP…DSPWYHMLIS (91 aa)). A helical membrane pass occupies residues 92–112 (MYGVLIVFGALGNTLVVIAVI). Topologically, residues 113–122 (RKPIMRTARN) are cytoplasmic. A helical membrane pass occupies residues 123–143 (LFILNLAISDLLLCLVTMPLT). The Extracellular segment spans residues 144 to 163 (LMEILSKYWPYGSCSILCKT). Cysteines 161 and 248 form a disulfide. Residues 164 to 184 (IAMLQALCIFVSTISITAIAF) form a helical membrane-spanning segment. Topologically, residues 185–202 (DRYQVIVYPTRDSLQFVG) are cytoplasmic. The helical transmembrane segment at 203–223 (AVTILAGIWALALLLASPLFV) threads the bilayer. Residues 224-262 (YKELINTDTPALLQQIGLQDTIPYCIEDWPSRNGRFYYS) lie on the Extracellular side of the membrane. A helical membrane pass occupies residues 263 to 283 (IFSLCVQYLVPILIVSVAYFG). Residues 284-317 (IYNKLKSRITVVAVQASSAQRKVERGRRMKRTNC) are Cytoplasmic-facing. Residues 318–338 (LLISIAIIFGVSWLPLNFFNL) form a helical membrane-spanning segment. The Extracellular portion of the chain corresponds to 339–355 (YADMERSPVTQSMLVRY). Residues 356 to 376 (AICHMIGMSSACSNPLLYGWL) form a helical membrane-spanning segment. The Cytoplasmic portion of the chain corresponds to 377–485 (NDNFRKEFQE…PSEVTKLMPR (109 aa)).

Belongs to the G-protein coupled receptor 1 family. Expressed in midgut, brain lobes and ventral nerve cord of larvae. In adults, expressed in a pair of dorsolateral neurons in the protocerebrum, and the central complex and a small number of neurons in the subesophageal ganglion (at protein level). Expressed in a subset of sugar-responsive PAIN neurons in the thoracic body but is absent from other peripheral PAIN neurons.

The protein resides in the membrane. In terms of biological role, receptor for NPF. Integral part of the sensory system that mediates food signaling, providing the neural basis for the regulation of food response; coordinates larval foraging and social behavior changes during development. Required in dopaminergic (DA) neurons that innervate the mushroom body for satiety to suppress appetitive memory performance; a key factor in the internal state of hunger in the brain. NPF neurons coordinately modulate diverse sensory and motor neurons important for feeding, flight, and locomotion. NPF/NPFR pathway exerts its suppressive effect on larval aversion to diverse stressful stimuli (chemical stress and noxious heat) through attenuation of TRP channel-induced neuronal excitation. NPF neural signaling system plays a physiological role in acute modulation of alcohol sensitivity in adults, rather than a general response to intoxication by sedative agents. Activation and inhibition of the NPF system reduces and enhances ethanol preference, respectively. Sexual experience, the NPF system activity and ethanol consumption are all linked; sexual deprivation is a major contributor to enhanced ethanol preference. The sequence is that of Neuropeptide F receptor from Drosophila melanogaster (Fruit fly).